A 267-amino-acid polypeptide reads, in one-letter code: tRNA pseudouridine synthase A (267 aa).

The active-site Nucleophile is the Asp51. Tyr109 is a substrate binding site.

This sequence belongs to the tRNA pseudouridine synthase TruA family. As to quaternary structure, homodimer.

The catalysed reaction is uridine(38/39/40) in tRNA = pseudouridine(38/39/40) in tRNA. Formation of pseudouridine at positions 38, 39 and 40 in the anticodon stem and loop of transfer RNAs. This Staphylococcus epidermidis (strain ATCC 35984 / DSM 28319 / BCRC 17069 / CCUG 31568 / BM 3577 / RP62A) protein is tRNA pseudouridine synthase A.